Reading from the N-terminus, the 770-residue chain is Rho guanine nucleotide exchange factor 38 (770 aa).

Positions 33–88 (KTDTVVDSSVSGDHSGSLRRSQSDRTEYNQKLQEKMTPQAECSSAETPTPEDEQQV) are disordered. Residue T34 is modified to Phosphothreonine. The span at 37 to 47 (VVDSSVSGDHS) shows a compositional bias: low complexity. Basic and acidic residues predominate over residues 53 to 66 (SQSDRTEYNQKLQE). Residues 94-285 (KRAKIIRELI…KDINVNINEL (192 aa)) form the DH domain. The region spanning 327–542 (LKILTRGESQ…VHSLTFVKEN (216 aa)) is the BAR domain. SH3 domains lie at 581 to 644 (GAEE…PHNP) and 706 to 769 (VDEQ…KMTY).

In terms of biological role, may act as a guanine-nucleotide releasing factor. This chain is Rho guanine nucleotide exchange factor 38 (Arhgef38), found in Mus musculus (Mouse).